The primary structure comprises 800 residues: MSRRRAHDTEDEGYDHRRNKRRRVSENQEIEDRLESLILRVGERSTSSVESNLEGLVSVLEADLGTFRLKILRILSDCAVRMPEKCTVYTTLVGLLNAKNYKFGGEFVDHMVKTFKESLKMCRWDAARYSLRFLADLVNCHVISATSLLQLLDTMIDVSNEDTVPQVRRDWFVFAVLSTLPWVGRDLYEKKESALESLLLRIEVYLNKRSKKHHNALRVWSSDAPHPQEEYLDCLWAQIRKLRQDNWAEKHIPRPYLVFDSILCEALQHNLPTIVPPPHHDNFEYPMPWVVYRMFDYTDCPDGPNLPGAHSIERFLIEEHLHHIIETYHHERKDCAAQLLSFPYKHKIPLEYCIVEVVFAELFHMPTPRYLDICYGSILIELCKLQPATLPQVLAQATEILFMRIDSMNTSCFDRFVNWFSYHLSNFKFTWSWDEWDSWLLLDGEHPRPKFIQEVLQKCLRLSYHQRITEMMPTTYAKLIPLTPVPNYKYANEEAASLPGTTVAHQLVVAIRQKCTPEEVVNILKDIPNSGYSGEEMSDGSFNALKIDVFVQTLLNLGSKSFSHSFAAISKFHSVFRALAETEEAQICILHNIFELWSSHQQMMVVLIDKLLKLQIVDCSAVATWIFSKEMTGEFTKLYLWEILHLTIKKMNKHVIKLNSELSEAKDKLAKADSSSSDSEDDSSHKRKKPITHADKPSEEVVERMEEKLEAANVNQKRLFLIVFQRFIMILSEHLLRSDTDGRDPDTDWYRWTIGRLQQVFLMHHEQVQKYSSTLETLLFTSDLDTHILEVFQQFVALRA.

The segment at 1–26 is disordered; the sequence is MSRRRAHDTEDEGYDHRRNKRRRVSE. Thr9 is modified (phosphothreonine). Positions 31–243 constitute an MIF4G domain; it reads EDRLESLILR…CLWAQIRKLR (213 aa). The segment at 669 to 700 is disordered; the sequence is LAKADSSSSDSEDDSSHKRKKPITHADKPSEE.

This sequence belongs to the NCBP1 family. As to quaternary structure, component of the nuclear cap-binding complex (CBC), a heterodimer composed of Cbp80 and Cbp20 that interacts with m7GpppG-capped RNA.

It is found in the nucleus. In terms of biological role, component of the cap-binding complex (CBC), which binds cotranscriptionally to the 5'-cap of pre-mRNAs and is involved in various processes such as pre-mRNA splicing and RNA-mediated gene silencing (RNAi). The CBC complex is involved in miRNA-mediated RNA interference via its interaction with Ars2 and is required for primary microRNAs (miRNAs) processing. Also involved in innate immunity via the short interfering RNAs (siRNAs) processing machinery by restricting the viral RNA production. In the CBC complex, Cbp80 does not bind directly capped RNAs (m7GpppG-capped RNA) but is required to stabilize the movement of the N-terminal loop of Cbp20 and lock the CBC into a high affinity cap-binding state with the cap structure. In Drosophila sechellia (Fruit fly), this protein is Nuclear cap-binding protein subunit 1 (Cbp80).